Consider the following 86-residue polypeptide: Probable weak neurotoxin NNAM1 (86 aa).

The signal sequence occupies residues M1–T21. 5 disulfide bridges follow: C24/C45, C27/C32, C38/C63, C67/C78, and C79/C84.

It belongs to the three-finger toxin family. Ancestral subfamily. Orphan group II sub-subfamily. In terms of tissue distribution, expressed by the venom gland.

It localises to the secreted. In terms of biological role, binds with low affinity to muscular (alpha-1-beta-1-delta-epsilon/CHRNA1-CHRNB1-CHRND-CHRNE) and very low affinity to neuronal (alpha-7/CHRNA7) nicotinic acetylcholine receptor (nAChR). The polypeptide is Probable weak neurotoxin NNAM1 (Naja atra (Chinese cobra)).